The chain runs to 133 residues: Small ribosomal subunit protein uS8 (133 aa).

The protein belongs to the universal ribosomal protein uS8 family. As to quaternary structure, part of the 30S ribosomal subunit. Contacts proteins S5 and S12.

One of the primary rRNA binding proteins, it binds directly to 16S rRNA central domain where it helps coordinate assembly of the platform of the 30S subunit. The chain is Small ribosomal subunit protein uS8 from Lachnoclostridium phytofermentans (strain ATCC 700394 / DSM 18823 / ISDg) (Clostridium phytofermentans).